We begin with the raw amino-acid sequence, 474 residues long: Immunoglobulin heavy constant mu (474 aa).

A CH1 region spans residues 1-105 (GSASAPTLFP…NKEKNVPLPV (105 aa)). Over 1–450 (GSASAPTLFP…EEGFENLWAT (450 aa)) the chain is Extracellular. Ig-like domains are found at residues 6-102 (PTLF…KNVP), 111-211 (PKVS…QNAS), 229-319 (PSFA…QTIS), and 329-430 (PDVY…RTVD). 2 disulfides stabilise this stretch: Cys28–Cys88 and Cys134–Cys197. Asn46 carries N-linked (GlcNAc...) (complex) asparagine glycosylation. Positions 106–217 (IAELPPKVSV…QNASSMCVPD (112 aa)) are CH2. Residue Asn209 is glycosylated (N-linked (GlcNAc...) (complex) asparagine). A CH3 region spans residues 218-323 (QDTAIRVFAI…LKQTISRPKG (106 aa)). 2 cysteine pairs are disulfide-bonded: Cys244/Cys303 and Cys351/Cys413. N-linked (GlcNAc...) asparagine glycans are attached at residues Asn272 and Asn279. Residues 324–452 (VALHRPDVYL…GFENLWATAS (129 aa)) form a CH4 region. Residues 437-453 (VSADEEGFENLWATAST) are important for IgM oligomerization. N-linked (GlcNAc...) asparagine glycosylation occurs at Asp440. A helical transmembrane segment spans residues 451-471 (ASTFIVLFLLSLFYSTTVTLF). Topologically, residues 472-474 (KVK) are cytoplasmic.

In terms of assembly, the basic structural unit of both sIgM and mIgM molecules consists of two identical heavy chains and two identical light chains; disulfide-linked. N-terminal variable regions of the heavy and light chains form the antigen binding sites, whereas the C-terminal constant regions of the heavy chains interact with immune receptors to mediate effector functions. As to quaternary structure, part of IgM antibody. Forms high order oligomers, homopentamers stabilized by the JCHAIN and homohexamers that lack JCHAIN. The oligomerization amplifies an inherently low affinity of IgM antibodies for the antigen by multi-point attachment (avidity). Adjacent IgM protomers associate via interchain disulfide links to form an asymmetric pentameric structure with a 50 degree gap. A single copy of JCHAIN is covalently linked to the first and the fifth IgM monomers via interchain disulfide bonds thus closing the pentamer ring. Only JCHAIN-containing IgM binds PIGR secretory component (via D1-CDR1 region); this interaction is a prerequisite for IgM transcytosis across mucosal epithelium. Pentameric sIgM interacts (via CH4 domain) with FCRM (via Ig-like domain); the interaction is glycan-independent and multivalent theoretically involving up to eight binding sites for the IgM pentamer. Interacts with FCAMR; this interaction facilitates the endocytosis of IgM-coated microbes or IgM-antigen immune complexes. Antigen-bound IgM (via the Fc region) binds to globular domains of C1q component of the complement system, all three modules C1QA, C1QB and C1QC being involved in IgM binding; this interaction is multivalent. Pentameric sIgM (via Fc region) interacts with CD5L (via SRCR2) through interchain disulfide-linkages; this interaction protects CD5L from renal excretion and provides for high levels of CD5L in circulation. Part of IgM B cell receptor complex on pre-B cells, immature and mature B cells. The BCR complex consists of one membrane-bound IgM molecule responsible for antigen binding, non-covalently associated with CD79A and CD79B signaling chains. Post-translationally, N-glycosylated; important for IgM secretion and its localization at the plasma membrane. The interaction with FCMR is glycan-independent.

The protein localises to the secreted. It localises to the cell membrane. Its function is as follows. Constant region of immunoglobulin heavy chains. Immunoglobulins, also known as antibodies, are membrane-bound or secreted glycoproteins produced by B lymphocytes. In the recognition phase of humoral immunity, the membrane-bound immunoglobulins serve as receptors which, upon binding of a specific antigen, trigger the clonal expansion and differentiation of B lymphocytes into immunoglobulins-secreting plasma cells. Secreted immunoglobulins mediate the effector phase of humoral immunity, which results in the elimination of bound antigens. The antigen binding site is formed by the variable domain of one heavy chain, together with that of its associated light chain. Thus, each immunoglobulin has two antigen binding sites with remarkable affinity for a particular antigen. The variable domains are assembled by a process called V-(D)-J rearrangement and can then be subjected to somatic hypermutations which, after exposure to antigen and selection, allow affinity maturation for a particular antigen. In terms of biological role, constant region of secreted IgM (sIgM), also known as the Fc region of IgM antibody. Able to multimerize, forms high order polymers, mainly pentamers and occasionally hexamers, providing for multivalency and high avidity recognition of antigens. Natural sIgM are polyreactive and recognize conserved self- and pathogen-derived structures, whereas immune sIgM are secreted only upon exposure to pathogens and are antigen-specific. Both natural and immune sIgM are required for an efficient humoral immune response to infection. Mediates sIgM effector functions mostly via Fc receptors and the complement system. On lymphoid cells binds high-affinity Fc receptor FCMR and promotes induction of an efficient neutralizing IgG response while maintaining tolerance to self-antigens. Recruits C1q complement component to initiate the classical complement pathway, facilitating the recognition and neutralization of pathogens by the host. Together with C1q and mannose-binding lectin promotes the phagocytosis of apoptotic cells by macrophages, ensuring the clearance of potential autoimmune epitopes from tissues. Involved in mucosal immunity. It is transported by transcytosis across mucosal epithelium by PIGR and secreted on the apical side in complex with PIGR secretory component to scan mucosal lining for pathogens. IgM-antigen complexes undergo FCMR-mediated retrotranscytosis across mucosal M cells toward antigen-presenting cells in mucosal lymphoid tissues. Functionally, constant region of membrane-bound IgM, part of the B cell receptor complex (BCR). IgM BCR provides constitutive tonic signaling for B cell survival. Mediates pre-BCR signaling that regulates B cell selection and rearrangement of Ig genes via allelic exclusion. This chain is Immunoglobulin heavy constant mu, found in Homo sapiens (Human).